Consider the following 335-residue polypeptide: UPF0353 protein MUL_1490 (335 aa).

The next 2 helical transmembrane spans lie at 18–38 (WFFL…VLQL) and 67–87 (IPAM…AGPT). One can recognise a VWFA domain in the interval 98–298 (VVMLVIDVSQ…SVYVSLQQQI (201 aa)). The chain crosses the membrane as a helical span at residues 309–329 (MGWLRLGALVLVAAALAALLI).

It belongs to the UPF0353 family.

The protein resides in the cell membrane. The sequence is that of UPF0353 protein MUL_1490 from Mycobacterium ulcerans (strain Agy99).